A 638-amino-acid chain; its full sequence is Voltage-gated potassium channel KCNC2 (638 aa).

Over 1–229 (MGKIENNERV…EDPYSSRAAR (229 aa)) the chain is Cytoplasmic. Residues 47–75 (LTAAGDKLQPLPPPLSPPPRPPPLSPVPS) form a disordered region. Pro residues predominate over residues 56–72 (PLPPPLSPPPRPPPLSP). Residues H124, C130, C151, and C152 each coordinate Zn(2+). The helical transmembrane segment at 230–248 (FIAFASLFFILVSITTFCL) threads the bilayer. Residues N259 and N266 are each glycosylated (N-linked (GlcNAc...) asparagine). Residues 284–303 (YVEGVCVVWFTFEFLVRIVF) traverse the membrane as a helical segment. At 304–314 (SPNKLEFIKNL) the chain is on the cytoplasmic side. The chain crosses the membrane as a helical span at residues 315–337 (LNIIDFVAILPFYLEVGLSGLSS). A helical; Voltage-sensor membrane pass occupies residues 346–368 (FLRVVRFVRILRIFKLTRHFVGL). The Cytoplasmic portion of the chain corresponds to 369–381 (RVLGHTLRASTNE). The chain crosses the membrane as a helical span at residues 382 to 401 (FLLLIIFLALGVLIFATMIY). K(+) is bound by residues T437, L438, G439, and Y440. The Selectivity filter signature appears at 437–442 (TLGYGD). The helical transmembrane segment at 451-473 (MLVGALCALAGVLTIAMPVPVIV) threads the bilayer. Topologically, residues 474 to 638 (NNFGMYYSLA…RSRSPIPSIL (165 aa)) are cytoplasmic. A disordered region spans residues 538 to 572 (SVLSGDDSTGSEPPLSPPERLPIRRSSTRDKNRRG). Residue S564 is modified to Phosphoserine; by PKA. S600 carries the phosphoserine modification.

The protein belongs to the potassium channel family. C (Shaw) (TC 1.A.1.2) subfamily. Kv3.2/KCNC2 sub-subfamily. As to quaternary structure, homotetramer and heterotetramer with other channel-forming alpha subunits, such as KCNC1. Interacts with KCNC1. Homotetramer or heterotetramer channel activity is regulated by association with modulating ancillary subunits such as KCNE1, KCNE2 and KCNE3, creating a functionally diverse range of channel complexes. Interacts with KCNE1, KCNE2 and KCNE3. Phosphorylated by PKA in cortical synaptosomes. cAMP-dependent phosphorylation inhibits channel activity. Histamine H2 receptor- and PKA-induced phosphorylation extends action potential spike duration, reduces action potential spike amplitude, sustains maximum firing frequency in hippocampal interneurons; also reduces the incidence of high-frequency oscillations in hippocampal CA3 pyramidal cell layers. In terms of tissue distribution, expressed in neurons of the visual cortex during postnatal development. Expressed in neurons of the globus pallidus at postnatal age day 7 (P7), onward. Expressed in thalamic relay neurons. Expressed in neurons in layer IV and deeper cortical layers of the neocortex. Expressed in hippocampal interneurons. Expressed in nonpyramidal interneurons in the basolateral amygdala. Expressed in retinal ganglion cells (at protein level). Widely expressed in the brain. Expressed in numerous thalamic relay neurons throughout the dorsal thalamus. Expressed in interneurons of the deep layers V-VI of the cerebral cortex, the CA1 and CA3 pyramidal and dentate gyrus (DG) granule cells of the hippocampus, in neurons of the caudate-putamen, globus pallidus and subthalamic nucleus. Also expressed in the optic layer of interior colliculus, the inferior colliculus, the red nucleus, the medial geniculate, the ventral lateral lemiscus, the reticulotegmental nucleus and in the deep cerebellar nuclei. Expressed in globus pallidus (GP) neurons.

Its subcellular location is the cell membrane. It localises to the membrane. The protein localises to the perikaryon. The protein resides in the cell projection. It is found in the axon. Its subcellular location is the synapse. It localises to the synaptosome. The protein localises to the dendrite. The protein resides in the postsynaptic cell membrane. It is found in the presynaptic cell membrane. Its subcellular location is the apical cell membrane. It localises to the basolateral cell membrane. The catalysed reaction is K(+)(in) = K(+)(out). With respect to regulation, inhibited by Stichodactyla helianthus peptide ShK. Inhibited by millimolar levels of tetraethylammonium (TEA). Contrary to other channels, inhibited only by millimolar levels of 4-aminopyridine (4-AP). In terms of biological role, voltage-gated potassium channel that mediates transmembrane potassium transport in excitable membranes, primarily in the brain. Contributes to the regulation of the fast action potential repolarization and in sustained high-frequency firing in neurons of the central nervous system. Homotetramer channels mediate delayed-rectifier voltage-dependent potassium currents that activate rapidly at high-threshold voltages and inactivate slowly. Forms tetrameric channels through which potassium ions pass in accordance with their electrochemical gradient. The channel alternates between opened and closed conformations in response to the voltage difference across the membrane. Can form functional homotetrameric channels and heterotetrameric channels that contain variable proportions of KCNC1, and possibly other family members as well; channel properties depend on the type of alpha subunits that are part of the channel. Channel properties may be modulated either by the association with ancillary subunits, such as KCNE1, KCNE2 and KCNE3 or indirectly by nitric oxide (NO) through a cGMP- and PKG-mediated signaling cascade, slowing channel activation and deactivation of delayed rectifier potassium channels. Contributes to fire sustained trains of very brief action potentials at high frequency in retinal ganglion cells, thalamocortical and suprachiasmatic nucleus (SCN) neurons and in hippocampal and neocortical interneurons. Sustained maximal action potential firing frequency in inhibitory hippocampal interneurons is negatively modulated by histamine H2 receptor activation in a cAMP- and protein kinase (PKA) phosphorylation-dependent manner. Plays a role in maintaining the fidelity of synaptic transmission in neocortical GABAergic interneurons by generating action potential (AP) repolarization at nerve terminals, thus reducing spike-evoked calcium influx and GABA neurotransmitter release. Required for long-range synchronization of gamma oscillations over distance in the neocortex. Contributes to the modulation of the circadian rhythm of spontaneous action potential firing in suprachiasmatic nucleus (SCN) neurons in a light-dependent manner. This is Voltage-gated potassium channel KCNC2 from Rattus norvegicus (Rat).